A 124-amino-acid chain; its full sequence is MGVVFAVALGGAIGSALRFLLSKVVQEHFGISFPVGTLFVNLVGAFFIGFFFAYLVDKLAVNPHARALLITGLLGGLTTFSTYSYESFSLLREGETLKFLAYTLGTNVLGIFFTFLGYILGESL.

Transmembrane regions (helical) follow at residues 1-21 (MGVV…RFLL), 35-55 (VGTL…FAYL), 68-88 (LLIT…YESF), and 99-119 (FLAY…LGYI). 2 residues coordinate Na(+): glycine 75 and threonine 78.

This sequence belongs to the fluoride channel Fluc/FEX (TC 1.A.43) family.

Its subcellular location is the cell inner membrane. The enzyme catalyses fluoride(in) = fluoride(out). Na(+) is not transported, but it plays an essential structural role and its presence is essential for fluoride channel function. Its function is as follows. Fluoride-specific ion channel. Important for reducing fluoride concentration in the cell, thus reducing its toxicity. This is Fluoride-specific ion channel FluC from Aquifex aeolicus (strain VF5).